Here is a 466-residue protein sequence, read N- to C-terminus: Putative outer membrane protein NMB0088 (466 aa).

The N-terminal stretch at 1 to 24 (MTPSALKKTVLLLGTAFAAASVHA) is a signal peptide.

The protein belongs to the OmpP1/FadL family.

Its subcellular location is the cell outer membrane. The protein is Putative outer membrane protein NMB0088 of Neisseria meningitidis serogroup B (strain ATCC BAA-335 / MC58).